A 489-amino-acid polypeptide reads, in one-letter code: Membrane-bound lytic murein transglycosylase F (489 aa).

The first 32 residues, 1 to 32, serve as a signal peptide directing secretion; it reads MFALTAYRLRCAAWLLATGIFLLLAGCSEAKA. A non-LT domain region spans residues 33–268; it reads PTALERVQKE…RLKDRYYGHV (236 aa). Residues 269-489 form an LT domain region; sequence DVLGYVGAYT…PEEDSGDEKL (221 aa). The active site involves Glu-315. Residues 466 to 489 are disordered; the sequence is AESGLHLPGVNKTRPEEDSGDEKL. Residues 478 to 489 show a composition bias toward basic and acidic residues; that stretch reads TRPEEDSGDEKL.

It in the N-terminal section; belongs to the bacterial solute-binding protein 3 family. The protein in the C-terminal section; belongs to the transglycosylase Slt family.

It is found in the cell outer membrane. The enzyme catalyses Exolytic cleavage of the (1-&gt;4)-beta-glycosidic linkage between N-acetylmuramic acid (MurNAc) and N-acetylglucosamine (GlcNAc) residues in peptidoglycan, from either the reducing or the non-reducing ends of the peptidoglycan chains, with concomitant formation of a 1,6-anhydrobond in the MurNAc residue.. Murein-degrading enzyme that degrades murein glycan strands and insoluble, high-molecular weight murein sacculi, with the concomitant formation of a 1,6-anhydromuramoyl product. Lytic transglycosylases (LTs) play an integral role in the metabolism of the peptidoglycan (PG) sacculus. Their lytic action creates space within the PG sacculus to allow for its expansion as well as for the insertion of various structures such as secretion systems and flagella. This Pseudomonas aeruginosa (strain UCBPP-PA14) protein is Membrane-bound lytic murein transglycosylase F.